Here is a 649-residue protein sequence, read N- to C-terminus: Acetyl-coenzyme A synthetase (649 aa).

Residues 190–193 and Thr-310 contribute to the CoA site; that span reads RGGR. ATP contacts are provided by residues 386–388, 410–415, Asp-499, and Arg-514; these read GEP and DTWWQT. CoA is bound at residue Ser-522. Arg-525 contributes to the ATP binding site. The Mg(2+) site is built by Val-536, His-538, and Val-541. Arg-583 provides a ligand contact to CoA. Residue Lys-608 is modified to N6-acetyllysine.

It belongs to the ATP-dependent AMP-binding enzyme family. Mg(2+) is required as a cofactor. Post-translationally, acetylated. Deacetylation by the SIR2-homolog deacetylase activates the enzyme.

The catalysed reaction is acetate + ATP + CoA = acetyl-CoA + AMP + diphosphate. Catalyzes the conversion of acetate into acetyl-CoA (AcCoA), an essential intermediate at the junction of anabolic and catabolic pathways. AcsA undergoes a two-step reaction. In the first half reaction, AcsA combines acetate with ATP to form acetyl-adenylate (AcAMP) intermediate. In the second half reaction, it can then transfer the acetyl group from AcAMP to the sulfhydryl group of CoA, forming the product AcCoA. The chain is Acetyl-coenzyme A synthetase from Methylorubrum extorquens (strain PA1) (Methylobacterium extorquens).